The chain runs to 504 residues: Arabinose import ATP-binding protein AraG (504 aa).

ABC transporter domains follow at residues 8–243 (LSFR…MVGR) and 256–499 (YGEE…MPKV). 40–47 (GENGAGKS) serves as a coordination point for ATP.

It belongs to the ABC transporter superfamily. Arabinose importer (TC 3.A.1.2.2) family. The complex is composed of two ATP-binding proteins (AraG), two transmembrane proteins (AraH) and a solute-binding protein (AraF).

It is found in the cell inner membrane. The catalysed reaction is L-arabinose(out) + ATP + H2O = L-arabinose(in) + ADP + phosphate + H(+). Part of the ABC transporter complex AraFGH involved in arabinose import. Responsible for energy coupling to the transport system. In Shigella flexneri, this protein is Arabinose import ATP-binding protein AraG.